A 236-amino-acid chain; its full sequence is Lipoarabinomannan carrier protein LprG (236 aa).

The N-terminal stretch at 1–26 (MRTPRRHCRRIAVLAAVSIAATVVAG) is a signal peptide. Cysteine 27 carries the N-palmitoyl cysteine lipid modification. A lipid anchor (S-diacylglycerol cysteine) is attached at cysteine 27.

Belongs to the LppX/LprAFG lipoprotein family. Post-translationally, modified by Lgt on Cys-27 with an S-linked diacylglyceral, signal peptide is removed by LspA, Cys-27 is further modifed with a fatty acid on its amino group by Lnt yielding a triacylated protein.

It is found in the cell inner membrane. The protein localises to the secreted. The protein resides in the cell wall. Helps membrane protein Mb1445c (P55) transport triacylglycerides (TAG) across the inner cell membrane into the periplasm and probably ultimately to the outer membrane. Binds TAG in its hydrophobic cavity and transfers it between lipid bilayers. TAG probably regulates lipid metabolism and growth regulation and plays a structural role in the outer membrane. Binds di- and triacylated phosphatidyl-myo-inositol mannosides (PIMs), and glycolipid lipoglycan modulins lipoarabinomannan (LAM) and lipomannan (LM), facilitating their recognition by TLR2. Required for activity of drug efflux transporter Mb1445c. Required, probably with Mb1445c, for normal surface localization of LAM. Its function is as follows. Constitutes a host TLR2 agonist (toll-like receptor). The protein is Lipoarabinomannan carrier protein LprG of Mycobacterium bovis (strain ATCC BAA-935 / AF2122/97).